The sequence spans 189 residues: Protein GrpE (189 aa).

The segment at 1-31 (MSKKHMKGNGGEVPENSEMSGSEELVAVEPG) is disordered.

This sequence belongs to the GrpE family. In terms of assembly, homodimer.

It is found in the cytoplasm. Functionally, participates actively in the response to hyperosmotic and heat shock by preventing the aggregation of stress-denatured proteins, in association with DnaK and GrpE. It is the nucleotide exchange factor for DnaK and may function as a thermosensor. Unfolded proteins bind initially to DnaJ; upon interaction with the DnaJ-bound protein, DnaK hydrolyzes its bound ATP, resulting in the formation of a stable complex. GrpE releases ADP from DnaK; ATP binding to DnaK triggers the release of the substrate protein, thus completing the reaction cycle. Several rounds of ATP-dependent interactions between DnaJ, DnaK and GrpE are required for fully efficient folding. In Syntrophobacter fumaroxidans (strain DSM 10017 / MPOB), this protein is Protein GrpE.